A 169-amino-acid polypeptide reads, in one-letter code: Cilia- and flagella-associated protein 68 (169 aa).

Mn stretches follow at residues T98–P109 and K139–P149.

It belongs to the CFAP68 family. As to quaternary structure, microtubule inner protein component of sperm flagellar doublet microtubules.

It localises to the cytoplasm. Its subcellular location is the cytoskeleton. The protein localises to the cilium axoneme. It is found in the flagellum axoneme. The protein resides in the nucleus. It localises to the cell projection. Its subcellular location is the cilium. Microtubule inner protein (MIP) part of the dynein-decorated doublet microtubules (DMTs) in cilia axoneme, which is required for motile cilia beating. This chain is Cilia- and flagella-associated protein 68 (CFAP68), found in Bos taurus (Bovine).